The sequence spans 417 residues: Gamma-glutamyl phosphate reductase (417 aa).

Belongs to the gamma-glutamyl phosphate reductase family.

It is found in the cytoplasm. The catalysed reaction is L-glutamate 5-semialdehyde + phosphate + NADP(+) = L-glutamyl 5-phosphate + NADPH + H(+). It functions in the pathway amino-acid biosynthesis; L-proline biosynthesis; L-glutamate 5-semialdehyde from L-glutamate: step 2/2. In terms of biological role, catalyzes the NADPH-dependent reduction of L-glutamate 5-phosphate into L-glutamate 5-semialdehyde and phosphate. The product spontaneously undergoes cyclization to form 1-pyrroline-5-carboxylate. The protein is Gamma-glutamyl phosphate reductase of Escherichia coli (strain SMS-3-5 / SECEC).